The primary structure comprises 582 residues: Choline kinase (582 aa).

Residues 1-36 (MVQESRPGSVRSYSVGYQARSRSSSQRRHSLTRQRS) form a disordered region. Serine 30 bears the Phosphoserine; by PKA mark. Serine 48 and serine 51 each carry phosphoserine. Phosphothreonine is present on threonine 54. Serine 85 is modified (phosphoserine; by PKA).

It belongs to the choline/ethanolamine kinase family. In terms of assembly, monomer. Interacts with NAP1. Mg(2+) serves as cofactor.

It is found in the cytoplasm. It carries out the reaction choline + ATP = phosphocholine + ADP + H(+). It catalyses the reaction ethanolamine + ATP = phosphoethanolamine + ADP + H(+). It participates in phospholipid metabolism; phosphatidylcholine biosynthesis; phosphocholine from choline: step 1/1. Functionally, catalyzes the committed step in the synthesis of phosphatidylcholine by the CDP-choline pathway. Also exhibits ethanolamine kinase activity but it is a poor substrate at 14% efficiency compared with choline. The polypeptide is Choline kinase (Saccharomyces cerevisiae (strain ATCC 204508 / S288c) (Baker's yeast)).